We begin with the raw amino-acid sequence, 182 residues long: Dephospho-CoA kinase (182 aa).

One can recognise a DPCK domain in the interval Val4–Thr182. Residue Gly12 to Thr17 participates in ATP binding.

This sequence belongs to the CoaE family.

The protein localises to the cytoplasm. It catalyses the reaction 3'-dephospho-CoA + ATP = ADP + CoA + H(+). The protein operates within cofactor biosynthesis; coenzyme A biosynthesis; CoA from (R)-pantothenate: step 5/5. Its function is as follows. Catalyzes the phosphorylation of the 3'-hydroxyl group of dephosphocoenzyme A to form coenzyme A. In Aliivibrio fischeri (strain ATCC 700601 / ES114) (Vibrio fischeri), this protein is Dephospho-CoA kinase.